The sequence spans 90 residues: Progonadoliberin-3 (90 aa).

Positions 1 to 23 (MDVSSKVVVQVLLLALVVQVTLC) are cleaved as a signal peptide. At Q24 the chain carries Pyrrolidone carboxylic acid. G33 is modified (glycine amide).

This sequence belongs to the GnRH family. As to expression, expressed in neuron cell bodies of the nucleus olfactoretinalis.

It localises to the secreted. Stimulates the secretion of gonadotropins. The protein is Progonadoliberin-3 (gnrh3) of Oryzias latipes (Japanese rice fish).